The chain runs to 70 residues: DNA-directed RNA polymerase subunit epsilon (70 aa).

Belongs to the RNA polymerase subunit epsilon family. In terms of assembly, RNAP is composed of a core of 2 alpha, a beta and a beta' subunit. The core is associated with a delta subunit, and at least one of epsilon or omega. When a sigma factor is associated with the core the holoenzyme is formed, which can initiate transcription.

It carries out the reaction RNA(n) + a ribonucleoside 5'-triphosphate = RNA(n+1) + diphosphate. Functionally, a non-essential component of RNA polymerase (RNAP). The chain is DNA-directed RNA polymerase subunit epsilon from Enterococcus faecalis (strain ATCC 700802 / V583).